Reading from the N-terminus, the 322-residue chain is Protein farnesyltransferase/geranylgeranyltransferase type-1 subunit alpha (322 aa).

Residues Met-1 to Gln-27 form a disordered region. PFTA repeat units lie at residues Arg-62–Glu-95, Gln-103–Asp-136, Lys-138–Asn-171, Glu-173–Pro-205, Arg-213–Thr-246, and Asn-287–Ile-321.

Belongs to the protein prenyltransferase subunit alpha family. As to quaternary structure, heterodimer of fntA and fntB (farnesyltransferase). Heterodimer of an alpha and a beta subunit. Mg(2+) serves as cofactor.

It catalyses the reaction L-cysteinyl-[protein] + (2E,6E)-farnesyl diphosphate = S-(2E,6E)-farnesyl-L-cysteinyl-[protein] + diphosphate. The catalysed reaction is geranylgeranyl diphosphate + L-cysteinyl-[protein] = S-geranylgeranyl-L-cysteinyl-[protein] + diphosphate. In terms of biological role, catalyzes the transfer of a farnesyl or geranyl-geranyl moiety from farnesyl or geranyl-geranyl diphosphate to a cysteine at the fourth position from the C-terminus of several proteins having the C-terminal sequence Cys-aliphatic-aliphatic-X. The alpha subunit is thought to participate in a stable complex with the substrate. The beta subunit binds the peptide substrate. In Dictyostelium discoideum (Social amoeba), this protein is Protein farnesyltransferase/geranylgeranyltransferase type-1 subunit alpha (fntA).